We begin with the raw amino-acid sequence, 149 residues long: Aquaporin-like protein 2 (149 aa).

Positions 1–35 (MSNESNDLEKNISHLDPTGVDNAYIPPEQPETKHS) are disordered. The Cytoplasmic portion of the chain corresponds to 1-47 (MSNESNDLEKNISHLDPTGVDNAYIPPEQPETKHSRFNIDRDTLRNH). A helical transmembrane segment spans residues 48 to 68 (FIAAVGEFCGTFMFLWCAYVI). At 69–89 (CNVANHDVALTTEPEGSHPGQ) the chain is on the extracellular side. A helical membrane pass occupies residues 90-110 (LIMIALGFGFSVMFSIWCFWW). Topologically, residues 111–149 (GFEPSRFSLFVFGQSHLTSQMCSDVVSSDHCWDGCWWCR) are cytoplasmic.

This sequence belongs to the MIP/aquaporin (TC 1.A.8) family.

It localises to the endoplasmic reticulum membrane. The protein localises to the cell membrane. Functionally, water channel required to facilitate the transport of water across membranes. Involved in freeze tolerance, osmotolerance and cell flocculation in liquid cultures. Is non-functional in most laboratory strains. The chain is Aquaporin-like protein 2 (AQY2-2) from Saccharomyces cerevisiae (strain JAY291) (Baker's yeast).